A 1038-amino-acid chain; its full sequence is Kinesin-like protein KIN-5B (1038 aa).

A disordered region spans residues 1 to 63 (MAQTPNPSRR…GGGGGGGSEM (63 aa)). A compositionally biased stretch (basic and acidic residues) spans 24–34 (RPERRQLELRW). Gly residues predominate over residues 49 to 61 (GLTGGGGGGGGGS). Positions 69 to 410 (NVQVVLRCRP…LDYAYRAKSI (342 aa)) constitute a Kinesin motor domain. 154–161 (GQTGTGKT) contacts ATP. A coiled-coil region spans residues 453 to 502 (QERFALEEAEKKTMRDKIEYLETQNKELKMNIESCKKEYLDLEEAHSRAN). The disordered stretch occupies residues 1013–1038 (DKGKRYVDQGTRTPRSPLMPVNHYNK).

This sequence belongs to the TRAFAC class myosin-kinesin ATPase superfamily. Kinesin family. KIN-5/BimC subfamily.

Its subcellular location is the cytoplasm. The protein resides in the cytoskeleton. The protein localises to the spindle. Its function is as follows. Responsible for microtubule translocation. May be important for the organization of phragmoplast-specific arrays of microtubules. Plays an essential role in stabilizing the mitotic spindle. Required during mitotic cytokinesis. The protein is Kinesin-like protein KIN-5B of Oryza sativa subsp. japonica (Rice).